The primary structure comprises 575 residues: Lysine--tRNA ligase (575 aa).

Residues glutamate 412 and glutamate 419 each contribute to the Mg(2+) site.

The protein belongs to the class-II aminoacyl-tRNA synthetase family. Homodimer. The cofactor is Mg(2+).

It is found in the cytoplasm. It catalyses the reaction tRNA(Lys) + L-lysine + ATP = L-lysyl-tRNA(Lys) + AMP + diphosphate. In Bacteroides fragilis (strain ATCC 25285 / DSM 2151 / CCUG 4856 / JCM 11019 / LMG 10263 / NCTC 9343 / Onslow / VPI 2553 / EN-2), this protein is Lysine--tRNA ligase.